The following is a 492-amino-acid chain: BTB/POZ domain and ankyrin repeat-containing protein NOOT2 (492 aa).

One can recognise a BTB domain in the interval 25 to 107 (SDVTFQVEGR…LYSGQVSIVP (83 aa)). Residues 113–127 (RPNCGERGCWHTHCT) form a C2HC NPR-type zinc finger. Zn(2+) is bound by residues Cys116, Cys121, His123, and Cys126. ANK repeat units follow at residues 248–277 (QKIRRMRRALDSSDVELVKLMVMGEGLNLD), 278–307 (EALALHYAVENCSREVVKALLELGAADVNY), 312–341 (AGKTSLHVAAEMVSPEMVAVLLDHHADPTV), and 345–379 (DGVTPLDILRTLTSDFLFKGAVPGLNHIEPNKLRL). 2 disordered regions span residues 395 to 439 (ENNA…NSIG) and 455 to 492 (TQMGGDDDNRHNNSHREAMNRQGGHGCDPSMYHHSHDF). Low complexity-rich tracts occupy residues 397-413 (NASNNNNNNNNASSSAA) and 425-439 (SSSSGNNNNNNNSIG). Over residues 461-473 (DDNRHNNSHREAM) the composition is skewed to basic and acidic residues.

This sequence belongs to the plant 'ANKYRIN-BTB/POZ' family. 'NOOT-BOP-COCH-like' (NBCL) subfamily. In terms of assembly, homodimer.

The protein resides in the nucleus. Its subcellular location is the cytoplasm. It is found in the cell membrane. Its pathway is protein modification; protein ubiquitination. Functionally, may act as a substrate-specific adapter of an E3 ubiquitin-protein ligase complex (CUL3-RBX1-BTB) which mediates the ubiquitination and subsequent proteasomal degradation of target proteins. Transcriptional co-regulator involved in the promotion of leaf and floral meristem fate and determinacy. Required for the abscission of senescent organs, probably by regulating the cell wall disorganization in abscission zones (AZs, e.g. pulvini at the base of leaves). Involved in the coordination of the symbiotic nodule developmental program; promotes the formation of root nodules by interacting directly with APP1 to modulate the expression of the nuclear transcription factor Y subunit (NF-YA1), a key nodulin. Involved in the regulation of indeterminate nodule identity in association with NOOT1. This is BTB/POZ domain and ankyrin repeat-containing protein NOOT2 from Medicago truncatula (Barrel medic).